We begin with the raw amino-acid sequence, 1399 residues long: DNA-directed RNA polymerase subunit beta' (1399 aa).

Residues C70, C72, C85, and C88 each contribute to the Zn(2+) site. Mg(2+) is bound by residues D460, D462, and D464. Zn(2+)-binding residues include C814, C888, C895, and C898.

Belongs to the RNA polymerase beta' chain family. In terms of assembly, the RNAP catalytic core consists of 2 alpha, 1 beta, 1 beta' and 1 omega subunit. When a sigma factor is associated with the core the holoenzyme is formed, which can initiate transcription. The cofactor is Mg(2+). Zn(2+) serves as cofactor.

It carries out the reaction RNA(n) + a ribonucleoside 5'-triphosphate = RNA(n+1) + diphosphate. In terms of biological role, DNA-dependent RNA polymerase catalyzes the transcription of DNA into RNA using the four ribonucleoside triphosphates as substrates. This Pseudomonas fluorescens (strain ATCC BAA-477 / NRRL B-23932 / Pf-5) protein is DNA-directed RNA polymerase subunit beta'.